The following is a 255-amino-acid chain: uncharacterized protein (255 aa).

The short motif at 253–255 (SKI) is the Microbody targeting signal element.

Belongs to the enoyl-CoA hydratase/isomerase family.

It localises to the peroxisome. This is an uncharacterized protein from Caenorhabditis elegans.